The sequence spans 1052 residues: Mitotic checkpoint serine/threonine-protein kinase BUB1 beta (1052 aa).

In terms of domain architecture, BUB1 N-terminal spans 56–219 (FESEIRFYSG…LEPSEPQRSS (164 aa)). The Nuclear localization signal signature appears at 105–112 (GETRYYND). The segment at 146 to 179 (AQFYISWAEEYEARENFKKADIIFQEGIERKAEP) is necessary for interaction with KNL1. Disordered regions lie at residues 206-256 (EEEA…NAVP) and 272-327 (ADTA…TSIP). Residues 217–225 (RSSLAELKS) carry the D-box motif. The residue at position 243 (Lys-243) is an N6-acetyllysine; by PCAF. Position 360 is a phosphoserine (Ser-360). A disordered region spans residues 361–381 (TRKPGREEGDPLQRVQSHQQG). Ser-428 carries the post-translational modification Phosphoserine. The disordered stretch occupies residues 496 to 552 (SNPREISPAENILQEQPDSKGSSMPFSIFDESLSDKKDKSPATGGPQVLNAQRRPLS). A compositionally biased stretch (polar residues) spans 508–520 (LQEQPDSKGSSMP). Ser-535 and Ser-659 each carry phosphoserine. Phosphoserine; by PLK1 is present on Ser-665. Ser-686 is subject to Phosphoserine. The 285-residue stretch at 756–1040 (VIKQEHLTCD…TISPEALLTQ (285 aa)) folds into the Protein kinase domain. 762–770 (LTCDDYRLF) is an ATP binding site. The residue at position 781 (Thr-781) is a Phosphothreonine; by PLK1. ATP is bound at residue Lys-784. The active-site Proton acceptor is Asp-871. Thr-998 carries the phosphothreonine; by PLK1 modification. Residues Ser-1033 and Ser-1050 each carry the phosphoserine modification.

Belongs to the protein kinase superfamily. Ser/Thr protein kinase family. BUB1 subfamily. Interacts with CENPE. Interacts with PLK1. Part of a complex containing BUB3, CDC20 and BUB1B. Interacts with anaphase-promoting complex/cyclosome (APC/C). Interacts with KNL1. Interacts with KAT2B. Interacts with RIPK3. Interacts with the closed conformation form of MAD2L1. Interacts with CDC20. In terms of processing, proteolytically cleaved by caspase-3 in a cell cycle specific manner. The cleavage might be involved in the durability of the cell cycle delay. Acetylation at Lys-243 regulates its degradation and timing in anaphase entry. Post-translationally, ubiquitinated. Degraded by the proteasome. Ubiquitinated by UBR5, promoting disassembly of the mitotic checkpoint complex from the APC/C complex. In terms of processing, sumoylated with SUMO2 and SUMO3. The sumoylation mediates the association with CENPE at the kinetochore. Autophosphorylated in vitro. Intramolecular autophosphorylation stimulated by CENPE. Phosphorylated during mitosis and hyperphosphorylated in mitotically arrested cells. Phosphorylation at Ser-659 and Ser-1033 occurs at kinetochores upon mitotic entry with dephosphorylation at the onset of anaphase. Post-translationally, proteolytically cleaved by caspase-3 in a cell cycle specific manner. The cleavage might be involved in the durability of the cell cycle delay. Caspase-3 cleavage is associated with abrogation of the mitotic checkpoint. The major site of cleavage is at Asp-603. Highly expressed in thymus followed by spleen.

Its subcellular location is the cytoplasm. The protein resides in the nucleus. It is found in the chromosome. The protein localises to the centromere. It localises to the kinetochore. The catalysed reaction is L-seryl-[protein] + ATP = O-phospho-L-seryl-[protein] + ADP + H(+). It catalyses the reaction L-threonyl-[protein] + ATP = O-phospho-L-threonyl-[protein] + ADP + H(+). Its activity is regulated as follows. Kinase activity stimulated by CENPE. In terms of biological role, essential component of the mitotic checkpoint. Required for normal mitosis progression and tumor suppression. The mitotic checkpoint delays anaphase until all chromosomes are properly attached to the mitotic spindle. One of its checkpoint functions is to inhibit the activity of the anaphase-promoting complex/cyclosome (APC/C) by blocking the binding of CDC20 to APC/C, independently of its kinase activity. The other is to monitor kinetochore activities that depend on the kinetochore motor CENPE. Required for kinetochore localization of CENPE. Negatively regulates PLK1 activity in interphase cells and suppresses centrosome amplification. Also implicated in triggering apoptosis in polyploid cells that exit aberrantly from mitotic arrest. Essential for tumor suppression. May play a role in regulating aging and fertility. This chain is Mitotic checkpoint serine/threonine-protein kinase BUB1 beta (Bub1b), found in Mus musculus (Mouse).